The following is a 267-amino-acid chain: Eukaryotic translation initiation factor 3 subunit J (267 aa).

2 disordered regions span residues 1 to 118 (MAPS…DLKH) and 221 to 241 (MREE…KTKV). Over residues 28–46 (DEEEEDVLDSWDAAEDSEV) the composition is skewed to acidic residues. Residues 44–99 (SEVEREKAAKAAAAAAKAEAEAAAKKKSKAQRIEERKQERKKLAEANESDEDSEED) adopt a coiled-coil conformation. Residues 74-88 (QRIEERKQERKKLAE) are compositionally biased toward basic and acidic residues. Positions 90-100 (NESDEDSEEDE) are enriched in acidic residues. Basic and acidic residues-rich tracts occupy residues 108–118 (RRTEKEGDLKH) and 221–231 (MREERAADKGN).

This sequence belongs to the eIF-3 subunit J family. Component of the eukaryotic translation initiation factor 3 (eIF-3) complex.

It is found in the cytoplasm. In terms of biological role, component of the eukaryotic translation initiation factor 3 (eIF-3) complex, which is involved in protein synthesis of a specialized repertoire of mRNAs and, together with other initiation factors, stimulates binding of mRNA and methionyl-tRNAi to the 40S ribosome. The eIF-3 complex specifically targets and initiates translation of a subset of mRNAs involved in cell proliferation. In Aspergillus fumigatus (strain CBS 144.89 / FGSC A1163 / CEA10) (Neosartorya fumigata), this protein is Eukaryotic translation initiation factor 3 subunit J (hcr1).